Here is a 141-residue protein sequence, read N- to C-terminus: Large ribosomal subunit protein uL22 (141 aa).

The segment at 108–141 is disordered; the sequence is KSEEKKTVAKKTTTTKAPAKKTTSTKKATVKKES. The span at 117–134 shows a compositional bias: low complexity; it reads KKTTTTKAPAKKTTSTKK.

Belongs to the universal ribosomal protein uL22 family. Part of the 50S ribosomal subunit.

Its function is as follows. This protein binds specifically to 23S rRNA; its binding is stimulated by other ribosomal proteins, e.g. L4, L17, and L20. It is important during the early stages of 50S assembly. It makes multiple contacts with different domains of the 23S rRNA in the assembled 50S subunit and ribosome. The globular domain of the protein is located near the polypeptide exit tunnel on the outside of the subunit, while an extended beta-hairpin is found that lines the wall of the exit tunnel in the center of the 70S ribosome. This Campylobacter jejuni subsp. jejuni serotype O:2 (strain ATCC 700819 / NCTC 11168) protein is Large ribosomal subunit protein uL22.